Here is a 317-residue protein sequence, read N- to C-terminus: Putative toluene-4-sulfonate monooxygenase system reductase subunit TsaB2 (317 aa).

The FAD-binding FR-type domain maps to 4-106 (DVPVTVAAVR…SAPRNLFEMA (103 aa)). 110–220 (RRVLLLAGGI…PGSVRMERFK (111 aa)) contributes to the NAD(+) binding site. Residues 232–317 (FELVLQRAGL…CGGGRLVLDI (86 aa)) enclose the 2Fe-2S ferredoxin-type domain. Residues Cys-266, Cys-271, and Cys-274 each coordinate [2Fe-2S] cluster.

As to quaternary structure, monomer. Part of the p-toluenesulfonate methyl-monooxygenase complex TsaBM, comprising the reductase TsaB and the oxygenase TsaM. FMN serves as cofactor.

Involved in the toluene-4-sulfonate degradation pathway. This chain is Putative toluene-4-sulfonate monooxygenase system reductase subunit TsaB2 (tsaB2), found in Comamonas testosteroni (Pseudomonas testosteroni).